The primary structure comprises 537 residues: Asparagine-rich protein (537 aa).

Disordered regions lie at residues 1–22, 187–254, 336–372, 399–479, and 509–528; these read YNNNNKNNNNNDDGNINYQNTN, NMNI…NNNF, YNNNESNTANPNQMNFEQTNNDNMKRENNNMNNYGYD, LNNN…DDWG, and DLSKKGNDGKNKKKNKMKKD. 2 stretches are compositionally biased toward low complexity: residues 336–347 and 399–469; these read YNNNESNTANPN and LNNN…NQNN. A compositionally biased stretch (acidic residues) spans 470-479; that stretch reads NEDEDDDDWG. The segment covering 509-518 has biased composition (basic and acidic residues); it reads DLSKKGNDGK.

This chain is Asparagine-rich protein, found in Plasmodium falciparum.